Here is a 368-residue protein sequence, read N- to C-terminus: Single-stranded DNA-binding protein 3 (368 aa).

A LisH domain is found at A16 to K48. Residues P100 to V368 are disordered. The segment covering G126 to N139 has biased composition (pro residues). Composition is skewed to low complexity over residues P174–M189, G211–G220, and P230–G248. Over residues G252 to P262 the composition is skewed to pro residues. A compositionally biased stretch (polar residues) spans A265 to T276. Over residues G295–G305 the composition is skewed to gly residues. Over residues N326–P337 the composition is skewed to low complexity. A compositionally biased stretch (polar residues) spans H353–V368.

In terms of tissue distribution, expressed in embryonic fibroblasts and chondrocytes.

It is found in the nucleus. May be involved in transcription regulation of the alpha 2(I) collagen gene where it binds to the single-stranded polypyrimidine sequences in the promoter region. The protein is Single-stranded DNA-binding protein 3 (SSBP3) of Gallus gallus (Chicken).